Reading from the N-terminus, the 132-residue chain is S-protein homolog 19 (132 aa).

The N-terminal stretch at 1-26 (MSGSLAFHIIMSVTFMVFFFGGLCEA) is a signal peptide. N-linked (GlcNAc...) asparagine glycosylation is present at asparagine 87.

Belongs to the plant self-incompatibility (S1) protein family.

It is found in the secreted. The sequence is that of S-protein homolog 19 from Arabidopsis thaliana (Mouse-ear cress).